We begin with the raw amino-acid sequence, 329 residues long: Glycerol-3-phosphate dehydrogenase [NAD(P)+] (329 aa).

Serine 13, tryptophan 14, histidine 34, and lysine 105 together coordinate NADPH. Positions 105, 134, and 136 each coordinate sn-glycerol 3-phosphate. Position 138 (alanine 138) interacts with NADPH. Sn-glycerol 3-phosphate is bound by residues lysine 189, aspartate 242, serine 252, arginine 253, and asparagine 254. The Proton acceptor role is filled by lysine 189. Residue arginine 253 participates in NADPH binding. Residues valine 277 and glutamate 279 each contribute to the NADPH site.

This sequence belongs to the NAD-dependent glycerol-3-phosphate dehydrogenase family.

The protein resides in the cytoplasm. It carries out the reaction sn-glycerol 3-phosphate + NAD(+) = dihydroxyacetone phosphate + NADH + H(+). It catalyses the reaction sn-glycerol 3-phosphate + NADP(+) = dihydroxyacetone phosphate + NADPH + H(+). It participates in membrane lipid metabolism; glycerophospholipid metabolism. Catalyzes the reduction of the glycolytic intermediate dihydroxyacetone phosphate (DHAP) to sn-glycerol 3-phosphate (G3P), the key precursor for phospholipid synthesis. This chain is Glycerol-3-phosphate dehydrogenase [NAD(P)+], found in Legionella pneumophila (strain Paris).